We begin with the raw amino-acid sequence, 495 residues long: Probable cytochrome P450 508C1 (495 aa).

The helical transmembrane segment at 3–21 threads the bilayer; that stretch reads LLNSLLLLFLIYLIHSFYI. Cys442 provides a ligand contact to heme.

Belongs to the cytochrome P450 family. Requires heme as cofactor.

It localises to the membrane. The sequence is that of Probable cytochrome P450 508C1 (cyp508C1) from Dictyostelium discoideum (Social amoeba).